We begin with the raw amino-acid sequence, 388 residues long: Protein SopA (388 aa).

The protein belongs to the ParA family.

In terms of biological role, this protein is essential for plasmid partition. It ensures the proper distribution of newly replicated plasmids to daughter cells during cell division. SopA is trans-acting. This chain is Protein SopA (sopA), found in Escherichia coli O157:H7.